The following is a 295-amino-acid chain: Protein SSO2 (295 aa).

The Cytoplasmic segment spans residues 1–269 (MSNANPYENN…ARKARKNKIR (269 aa)). Residues Ser-31 and Ser-34 each carry the phosphoserine modification. The stretch at 39–100 (AFMNKINSIN…ATDLQYQLKA (62 aa)) forms a coiled coil. The t-SNARE coiled-coil homology domain occupies 194–256 (LAEVQARHQE…EQGVGHTNKA (63 aa)). Residues 270–291 (CLIICFIIFAIVVVVVVVPSVV) traverse the membrane as a helical; Anchor for type IV membrane protein segment. Residues 292–295 (ETRK) are Extracellular-facing.

The protein belongs to the syntaxin family.

It localises to the membrane. Required for vesicle fusion with the plasma membrane. In Saccharomyces cerevisiae (strain ATCC 204508 / S288c) (Baker's yeast), this protein is Protein SSO2 (SSO2).